The sequence spans 357 residues: Protein RecA (357 aa).

An ATP-binding site is contributed by 67 to 74 (GPESSGKT).

It belongs to the RecA family.

Its subcellular location is the cytoplasm. Can catalyze the hydrolysis of ATP in the presence of single-stranded DNA, the ATP-dependent uptake of single-stranded DNA by duplex DNA, and the ATP-dependent hybridization of homologous single-stranded DNAs. It interacts with LexA causing its activation and leading to its autocatalytic cleavage. The polypeptide is Protein RecA (Leifsonia xyli subsp. xyli (strain CTCB07)).